The primary structure comprises 575 residues: Major outer membrane protein MspA (575 aa).

An N-terminal signal peptide occupies residues 1-19; it reads MKKALVFFVALAMIGSVFA.

It is found in the cell outer membrane. Major component of the outer membrane sheath. This is Major outer membrane protein MspA (mspA) from Treponema maltophilum.